Reading from the N-terminus, the 234-residue chain is Inosine triphosphate pyrophosphatase (234 aa).

Residue Ser-11–Lys-16 participates in ITP binding. Position 40 (Glu-40) interacts with Mg(2+). ITP-binding positions include Lys-53, Asp-81 to Thr-82, Lys-98, Phe-176 to Asp-179, Lys-203, and His-208 to Arg-209.

It belongs to the HAM1 NTPase family. Homodimer. Mg(2+) is required as a cofactor. It depends on Mn(2+) as a cofactor.

The protein localises to the cytoplasm. It catalyses the reaction ITP + H2O = IMP + diphosphate + H(+). The enzyme catalyses dITP + H2O = dIMP + diphosphate + H(+). It carries out the reaction XTP + H2O = XMP + diphosphate + H(+). Its function is as follows. Pyrophosphatase that hydrolyzes non-canonical purine nucleotides such as inosine triphosphate (ITP), deoxyinosine triphosphate (dITP) or xanthosine 5'-triphosphate (XTP) to their respective monophosphate derivatives. The enzyme does not distinguish between the deoxy- and ribose forms. Probably excludes non-canonical purines from RNA and DNA precursor pools, thus preventing their incorporation into RNA and DNA and avoiding chromosomal lesions. The sequence is that of Inosine triphosphate pyrophosphatase from Leishmania major.